We begin with the raw amino-acid sequence, 262 residues long: Dihydroorotate dehydrogenase B (NAD(+)), electron transfer subunit (262 aa).

The FAD-binding FR-type domain maps to 3-104 (KLQEMMTIVS…MGPLGNGFPV (102 aa)). FAD contacts are provided by residues 53–56 (RPIS), 70–72 (LYR), and 79–80 (GT). The [2Fe-2S] cluster site is built by cysteine 226, cysteine 231, cysteine 234, and cysteine 249.

The protein belongs to the PyrK family. As to quaternary structure, heterotetramer of 2 PyrK and 2 PyrD type B subunits. [2Fe-2S] cluster serves as cofactor. FAD is required as a cofactor.

It functions in the pathway pyrimidine metabolism; UMP biosynthesis via de novo pathway; orotate from (S)-dihydroorotate (NAD(+) route): step 1/1. Its function is as follows. Responsible for channeling the electrons from the oxidation of dihydroorotate from the FMN redox center in the PyrD type B subunit to the ultimate electron acceptor NAD(+). This is Dihydroorotate dehydrogenase B (NAD(+)), electron transfer subunit from Lactococcus lactis subsp. lactis (strain IL1403) (Streptococcus lactis).